A 195-amino-acid chain; its full sequence is AP-4-A phosphorylase (195 aa).

The span at methionine 1–phenylalanine 17 shows a compositional bias: basic and acidic residues. Positions methionine 1–glycine 20 are disordered. The HIT domain occupies proline 57 to phenylalanine 166. The short motif at histidine 151 to histidine 155 is the Histidine triad motif element. The active-site Tele-AMP-histidine intermediate is histidine 153.

Homotetramer. It depends on a divalent metal cation as a cofactor.

The enzyme catalyses ADP + ATP + H(+) = P(1),P(4)-bis(5'-adenosyl) tetraphosphate + phosphate. Catabolizes diadenosine 5',5'''-P1,P4-tetraphosphate (Ap4A) into ADP and ATP. The chain is AP-4-A phosphorylase from Mycobacterium tuberculosis (strain CDC 1551 / Oshkosh).